The primary structure comprises 509 residues: MLSRALLCLALAWAARVGADALEEEDNVLVLKKSNFAEALAAHNYLLVEFYAPWCGHCKALAPEYAKAAAKLKAEGSEIRLAKVDATEESDLAQQYGVRGYPTIKFFKNGDTASPKEYTAGREADDIVNWLKKRTGPAATTLSDTAAAESLVDSSEVTVIGFFKDAGSDSAKQFLLAAEAVDDIPFGITSNSDVFSKYQLDKDGVVLFKKFDEGRNNFEGEITKEKLLDFIKHNQLPLVIEFTEQTAPKIFGGEIKTHILLFLPKSVSDYDGKLSNFKKAAEGFKGKILFIFIDSDHTDNQRILEFFGLKKEECPAVRLITLEEEMTKYKPESDELTAEKITQFCHHFLEGKIKPHLMSQELPEDWDKQPVKVLVGKNFEEVAFDEKKNVFVEFYAPWCGHCKQLAPIWDKLGETYKDHENIVIAKMDSTANEVEAVKVHSFPTLKFFPASADRTVIDYNGERTLDGFKKFLESGGQDGAGDNDDLDLEEALEPDMEEDDDQKAVKDEL.

Residues 1–19 (MLSRALLCLALAWAARVGA) form the signal peptide. Positions 20-136 (DALEEEDNVL…IVNWLKKRTG (117 aa)) constitute a Thioredoxin 1 domain. Active-site nucleophile residues include Cys55 and Cys58. Cys55 and Cys58 are oxidised to a cystine. Lys202 is modified (N6-acetyllysine). Lys224 and Lys273 each carry N6-succinyllysine. Ser333 and Ser359 each carry phosphoserine. One can recognise a Thioredoxin 2 domain in the interval 335 to 477 (ELTAEKITQF…FKKFLESGGQ (143 aa)). Active-site nucleophile residues include Cys399 and Cys402. A disulfide bridge links Cys399 with Cys402. The residue at position 429 (Ser429) is a Phosphoserine. Residues 506–509 (KDEL) carry the Prevents secretion from ER motif.

This sequence belongs to the protein disulfide isomerase family. Heterodimer; heterodimerizes with the protein microsomal triglyceride transfer MTTP. Homodimer. Monomers and homotetramers may also occur. Interacts with P4HA2, forming a heterotetramer consisting of 2 alpha subunits (P4HA2) and 2 beta (P4HB), where P4HB plays the role of a structural subunit; this tetramer catalyzes the formation of 4-hydroxyproline in collagen. Also constitutes the structural subunit of the microsomal triacylglycerol transfer protein MTTP in mammalian cells. Stabilizes both enzymes and retain them in the ER without contributing to the catalytic activity. Binds UBQLN1. Interacts with ERO1B. Interacts with ILDR2. Interacts with ERN1/IRE1A (via N-terminus); the interaction is enhanced by phosphorylation of P4HB by FAM20C in response to endoplasmic reticulum stress and results in attenuation of ERN1 activity. In terms of processing, phosphorylation of Ser-359 by FAM20C is induced by endoplasmic reticulum stress and results in a functional switch from oxidoreductase to molecular chaperone. It also promotes interaction with ERN1.

It is found in the endoplasmic reticulum. The protein localises to the endoplasmic reticulum lumen. Its subcellular location is the melanosome. It localises to the cell membrane. The catalysed reaction is Catalyzes the rearrangement of -S-S- bonds in proteins.. In terms of biological role, this multifunctional protein catalyzes the formation, breakage and rearrangement of disulfide bonds. At the cell surface, seems to act as a reductase that cleaves disulfide bonds of proteins attached to the cell. May therefore cause structural modifications of exofacial proteins. Inside the cell, seems to form/rearrange disulfide bonds of nascent proteins. At high concentrations and following phosphorylation by FAM20C, functions as a chaperone that inhibits aggregation of misfolded proteins. At low concentrations, facilitates aggregation (anti-chaperone activity). May be involved with other chaperones in the structural modification of the TG precursor in hormone biogenesis. Also acts as a structural subunit of various enzymes such as prolyl 4-hydroxylase and microsomal triacylglycerol transfer protein MTTP. Receptor for LGALS9; the interaction retains P4HB at the cell surface of Th2 T helper cells, increasing disulfide reductase activity at the plasma membrane, altering the plasma membrane redox state and enhancing cell migration. This is Protein disulfide-isomerase (P4hb) from Rattus norvegicus (Rat).